Reading from the N-terminus, the 118-residue chain is Holo-[acyl-carrier-protein] synthase (118 aa).

The Mg(2+) site is built by D5 and E51.

This sequence belongs to the P-Pant transferase superfamily. AcpS family. Mg(2+) is required as a cofactor.

It is found in the cytoplasm. The enzyme catalyses apo-[ACP] + CoA = holo-[ACP] + adenosine 3',5'-bisphosphate + H(+). In terms of biological role, transfers the 4'-phosphopantetheine moiety from coenzyme A to a Ser of acyl-carrier-protein. This chain is Holo-[acyl-carrier-protein] synthase, found in Helicobacter pylori (strain P12).